The sequence spans 325 residues: MKFWYTKSWIAYLLLPFSFLFWLVSQCRRWLFQAGIIKSYRAPVPIVIVGNLSVGGNGKTPVVIWLVKALQQNGLRVGVISRGYGSQSAVYPLLVTEKTDPLEGGDEPVLIAQRTQVPVCISANRQQAIELLLQTQPCDVIVSDDGLQHYKLQRDFEIVVVDAQRGFGNGFVMPAGPLRELPSRLDSVDLVIANGKANRYSQTVMTLAADYAVNLVTKEKRLLTEFESGSAFAGIGNPQRFFTMLQGFGIQLKQTYEFQDHQKFSAELFAKFSKNEPHFMTEKDAVKCFPFARENWWYVPVEAKITGQSAVNFIENIVERVKNGQ.

Position 53–60 (53–60) interacts with ATP; it reads SVGGNGKT.

Belongs to the LpxK family.

The catalysed reaction is a lipid A disaccharide + ATP = a lipid IVA + ADP + H(+). It functions in the pathway glycolipid biosynthesis; lipid IV(A) biosynthesis; lipid IV(A) from (3R)-3-hydroxytetradecanoyl-[acyl-carrier-protein] and UDP-N-acetyl-alpha-D-glucosamine: step 6/6. Its function is as follows. Transfers the gamma-phosphate of ATP to the 4'-position of a tetraacyldisaccharide 1-phosphate intermediate (termed DS-1-P) to form tetraacyldisaccharide 1,4'-bis-phosphate (lipid IVA). The chain is Tetraacyldisaccharide 4'-kinase from Mannheimia succiniciproducens (strain KCTC 0769BP / MBEL55E).